Reading from the N-terminus, the 366-residue chain is Cell division protein FtsZ 1 (366 aa).

GTP-binding positions include 45 to 49, 132 to 134, Glu163, Arg167, and Asp210; these read GAGCN and GTG. The span at 344-354 shows a compositional bias: acidic residues; sequence PEEETPLETPE. The tract at residues 344-366 is disordered; sequence PEEETPLETPEESPSIEISIPEL. Positions 355 to 366 are enriched in low complexity; it reads ESPSIEISIPEL.

It belongs to the FtsZ family. In terms of assembly, homodimer. Polymerizes to form a dynamic ring structure in a strictly GTP-dependent manner. Interacts directly with several other division proteins.

It localises to the cytoplasm. Functionally, essential cell division protein that forms a contractile ring structure (Z ring) at the future cell division site. The regulation of the ring assembly controls the timing and the location of cell division. One of the functions of the FtsZ ring is to recruit other cell division proteins to the septum to produce a new cell wall between the dividing cells. Binds GTP and shows GTPase activity. This Pyrococcus woesei protein is Cell division protein FtsZ 1.